Reading from the N-terminus, the 329-residue chain is Carbonic anhydrase (329 aa).

The interval Met-1–Ala-108 is chloroplast transit peptide-like.

This sequence belongs to the beta-class carbonic anhydrase family. As to quaternary structure, homohexamer.

The protein localises to the cytoplasm. It catalyses the reaction hydrogencarbonate + H(+) = CO2 + H2O. Its function is as follows. Reversible hydration of carbon dioxide. This is Carbonic anhydrase from Flaveria pringlei.